Here is a 473-residue protein sequence, read N- to C-terminus: C3a anaphylatoxin chemotactic receptor (473 aa).

The Extracellular portion of the chain corresponds to 1 to 23 (MESFTADTNSTDLHSRPLFKPQD). A glycan (N-linked (GlcNAc...) asparagine) is linked at Asn9. A helical transmembrane segment spans residues 24-46 (IASMVILSLTCLLGLPGNGLVLW). At 47-57 (VAGVKMKRTVN) the chain is on the cytoplasmic side. The chain crosses the membrane as a helical span at residues 58–80 (TVWFLHLTLADFLCCLSLPFSVA). At 81–96 (HLILRGHWPYGLFLCK) the chain is on the extracellular side. Cys95 and Cys172 are oxidised to a cystine. The chain crosses the membrane as a helical span at residues 97 to 118 (LIPSVIILNMFASVFLLTAISL). Topologically, residues 119–139 (DRCLMVHKPIWCQNHRSVRTA) are cytoplasmic. A helical membrane pass occupies residues 140–160 (FAVCGCVWVVTFVMCIPVFVY). The Extracellular segment spans residues 161 to 329 (RDLLVVDDYS…TPQVAITISR (169 aa)). 2 positions are modified to sulfotyrosine: Tyr174 and Tyr184. N-linked (GlcNAc...) asparagine glycosylation occurs at Asn201. Residues 233–252 (FHTSPEDPFSQDSASQQPHY) form a disordered region. Tyr308 is modified (sulfotyrosine). A helical transmembrane segment spans residues 330-349 (LVVGFLVPFFIMITCYSLIV). Over 350–366 (FRMRKTNLTKSRNKTLR) the chain is Cytoplasmic. Residues 367–389 (VAVAVVTVFFVCWIPYHIVGILL) traverse the membrane as a helical segment. Over 390 to 406 (VITDQESALREVVLPWD) the chain is Extracellular. The chain crosses the membrane as a helical span at residues 407-427 (HMSIALASANSCFNPFLYALL). Over 428 to 473 (GKDFRKKARQSVKGILEAAFSEELTHSTSCTQDKAPSKRNHMSTDV) the chain is Cytoplasmic. Ser448 is modified (phosphoserine). Thr452 carries the post-translational modification Phosphothreonine.

This sequence belongs to the G-protein coupled receptor 1 family. In terms of assembly, interacts with VGF-derived peptide TLQP-21.

Its subcellular location is the cell membrane. Functionally, receptor for the chemotactic and inflammatory peptide anaphylatoxin C3a. This receptor stimulates chemotaxis, granule enzyme release and superoxide anion production. The protein is C3a anaphylatoxin chemotactic receptor (C3ar1) of Rattus norvegicus (Rat).